Reading from the N-terminus, the 305-residue chain is Acyl transferase (305 aa).

Active-site charge relay system residues include Ser-116, Asp-213, and His-243.

This sequence belongs to the LuxD family.

The protein operates within lipid metabolism; fatty acid reduction for biolumincescence. Acyl transferase is part of the fatty acid reductase system required for aldehyde biosynthesis; it produces fatty acids for the luminescent reaction. The protein is Acyl transferase of Shewanella woodyi (strain ATCC 51908 / MS32).